The following is a 798-amino-acid chain: Glycogen phosphorylase (798 aa).

Lys646 is modified (N6-(pyridoxal phosphate)lysine).

It belongs to the glycogen phosphorylase family. The cofactor is pyridoxal 5'-phosphate.

The catalysed reaction is [(1-&gt;4)-alpha-D-glucosyl](n) + phosphate = [(1-&gt;4)-alpha-D-glucosyl](n-1) + alpha-D-glucose 1-phosphate. Functionally, phosphorylase is an important allosteric enzyme in carbohydrate metabolism. Enzymes from different sources differ in their regulatory mechanisms and in their natural substrates. However, all known phosphorylases share catalytic and structural properties. This Bacillus subtilis (strain 168) protein is Glycogen phosphorylase (glgP).